The sequence spans 163 residues: MIGLLLGLIYYIPALVANGSAPFIKSGTPIDFKRKLNDGRRVLGDGKTFEGLLLSLTFGTTVGAIISRFLGIEWIIIGFVESLGAMLGDMLGAFIKRRIGLERGARAPILDQLDFILGATVVLISFNVNLNIYQVVFVCVLVIALHMFTNYVAYRLKIKSVPW.

Transmembrane regions (helical) follow at residues 4 to 24, 52 to 72, 75 to 95, 107 to 127, and 128 to 148; these read LLLGLIYYIPALVANGSAPFI, LLLSLTFGTTVGAIISRFLGI, IIIGFVESLGAMLGDMLGAFI, APILDQLDFILGATVVLISFN, and VNLNIYQVVFVCVLVIALHMF.

Belongs to the CDP-archaeol synthase family. Mg(2+) is required as a cofactor.

Its subcellular location is the cell membrane. The enzyme catalyses 2,3-bis-O-(geranylgeranyl)-sn-glycerol 1-phosphate + CTP + H(+) = CDP-2,3-bis-O-(geranylgeranyl)-sn-glycerol + diphosphate. It participates in membrane lipid metabolism; glycerophospholipid metabolism. Catalyzes the formation of CDP-2,3-bis-(O-geranylgeranyl)-sn-glycerol (CDP-archaeol) from 2,3-bis-(O-geranylgeranyl)-sn-glycerol 1-phosphate (DGGGP) and CTP. This reaction is the third ether-bond-formation step in the biosynthesis of archaeal membrane lipids. The protein is CDP-archaeol synthase of Sulfolobus acidocaldarius (strain ATCC 33909 / DSM 639 / JCM 8929 / NBRC 15157 / NCIMB 11770).